The following is a 129-amino-acid chain: Fluoride-specific ion channel FluC (129 aa).

4 helical membrane-spanning segments follow: residues 5-25, 32-52, 60-80, and 99-119; these read LTIALFCAGGGLARYYLSGWV, AFPFGTLAVNLIGAYCIGLIM, LIPATLRLGLTVGFMGGLTTF, and AMVNALASVVMCLLCTWLGVI. Na(+)-binding residues include glycine 75 and threonine 78.

It belongs to the fluoride channel Fluc/FEX (TC 1.A.43) family.

Its subcellular location is the cell inner membrane. It carries out the reaction fluoride(in) = fluoride(out). Na(+) is not transported, but it plays an essential structural role and its presence is essential for fluoride channel function. Fluoride-specific ion channel. Important for reducing fluoride concentration in the cell, thus reducing its toxicity. The polypeptide is Fluoride-specific ion channel FluC (Pelobacter propionicus (strain DSM 2379 / NBRC 103807 / OttBd1)).